The chain runs to 164 residues: UPF0178 protein RPD_2254 (164 aa).

This sequence belongs to the UPF0178 family.

The protein is UPF0178 protein RPD_2254 of Rhodopseudomonas palustris (strain BisB5).